A 355-amino-acid polypeptide reads, in one-letter code: Glycerol-1-phosphate dehydrogenase [NAD(P)+] (355 aa).

NAD(+) is bound by residues 101–105 and 123–126; these read GKSID and TAAS. Substrate is bound at residue Asp-128. Ser-132 is a binding site for NAD(+). Position 175 (Asp-175) interacts with substrate. Positions 175 and 255 each coordinate Zn(2+). His-259 lines the substrate pocket. His-271 provides a ligand contact to Zn(2+).

The protein belongs to the glycerol-1-phosphate dehydrogenase family. As to quaternary structure, homodimer. Requires Zn(2+) as cofactor.

It is found in the cytoplasm. The enzyme catalyses sn-glycerol 1-phosphate + NAD(+) = dihydroxyacetone phosphate + NADH + H(+). It carries out the reaction sn-glycerol 1-phosphate + NADP(+) = dihydroxyacetone phosphate + NADPH + H(+). The protein operates within membrane lipid metabolism; glycerophospholipid metabolism. Functionally, catalyzes the NAD(P)H-dependent reduction of dihydroxyacetonephosphate (DHAP or glycerone phosphate) to glycerol 1-phosphate (G1P). The G1P thus generated is used as the glycerophosphate backbone of phospholipids in the cellular membranes of Archaea. The protein is Glycerol-1-phosphate dehydrogenase [NAD(P)+] of Staphylothermus marinus (strain ATCC 43588 / DSM 3639 / JCM 9404 / F1).